Consider the following 388-residue polypeptide: 1D-myo-inositol 2-acetamido-2-deoxy-alpha-D-glucopyranoside deacetylase (388 aa).

Positions 6, 9, and 144 each coordinate Zn(2+). Residues 369 to 388 (LDQADEGAAHDTSEQSGQRR) are disordered.

This sequence belongs to the MshB deacetylase family. It depends on Zn(2+) as a cofactor.

It carries out the reaction 1D-myo-inositol 2-acetamido-2-deoxy-alpha-D-glucopyranoside + H2O = 1D-myo-inositol 2-amino-2-deoxy-alpha-D-glucopyranoside + acetate. Its function is as follows. Catalyzes the deacetylation of 1D-myo-inositol 2-acetamido-2-deoxy-alpha-D-glucopyranoside (GlcNAc-Ins) in the mycothiol biosynthesis pathway. This is 1D-myo-inositol 2-acetamido-2-deoxy-alpha-D-glucopyranoside deacetylase from Corynebacterium kroppenstedtii (strain DSM 44385 / JCM 11950 / CIP 105744 / CCUG 35717).